The primary structure comprises 382 residues: MSLDFLPFSRPSIGEDEIAAVEQVLRSGWITTGPKNQELEQRFAERLGCRHAVALSSATGALHVTLLALGIGPGDEVITPSLTWVSTANVITLLGATPVFVDVDRDTLMCSAQAVEAAIGPRTRAIVPVHYAGSTLDLEGLRTVAGRHGIALVEDAAHAVGSEYRGRPVGSRGTAIFSFHAIKNLTCAEGAMFVSDDSALAERVRRLKFHGLGVDAYDRLSHGRKPQAEVIEPGFKYNLADLNAALALVQLKRLDALNARRQALAERYLERLAGLPLAPLGLPAHKQRHAWHLFILRIDAEVCGLGRDAFMEALKARGIGSGIHFIASHLHHYYRQRQPRLSLPNSEWNSARLCSIPLFPDMRDDDIERVARAIEEILEKRR.

Lys-183 is subject to N6-(pyridoxal phosphate)lysine.

This sequence belongs to the DegT/DnrJ/EryC1 family. ArnB subfamily. Homodimer. Pyridoxal 5'-phosphate is required as a cofactor.

The catalysed reaction is UDP-4-amino-4-deoxy-beta-L-arabinose + 2-oxoglutarate = UDP-beta-L-threo-pentopyranos-4-ulose + L-glutamate. It participates in nucleotide-sugar biosynthesis; UDP-4-deoxy-4-formamido-beta-L-arabinose biosynthesis; UDP-4-deoxy-4-formamido-beta-L-arabinose from UDP-alpha-D-glucuronate: step 2/3. The protein operates within bacterial outer membrane biogenesis; lipopolysaccharide biosynthesis. Its function is as follows. Catalyzes the conversion of UDP-4-keto-arabinose (UDP-Ara4O) to UDP-4-amino-4-deoxy-L-arabinose (UDP-L-Ara4N). The modified arabinose is attached to lipid A and is required for resistance to polymyxin and cationic antimicrobial peptides. The polypeptide is UDP-4-amino-4-deoxy-L-arabinose--oxoglutarate aminotransferase (Pseudomonas aeruginosa (strain ATCC 15692 / DSM 22644 / CIP 104116 / JCM 14847 / LMG 12228 / 1C / PRS 101 / PAO1)).